We begin with the raw amino-acid sequence, 1233 residues long: STE20-like serine/threonine-protein kinase (1233 aa).

At Ser14 the chain carries Phosphoserine. The Protein kinase domain occupies 34 to 292; sequence WEIIGELGDG…TSQLLQHPFV (259 aa). ATP contacts are provided by residues 40-48 and Lys63; that span reads LGDGAFGKV. The active-site Proton acceptor is Asp155. Thr183 carries the phosphothreonine modification. Phosphoserine is present on Ser189. Residues 309–351 form a disordered region; it reads AEVTEEVEDGKEEDEEEEAENALPIPANKRASSDLSIASSEED. Over residues 312 to 328 the composition is skewed to acidic residues; it reads TEEVEDGKEEDEEEEAE. Phosphoserine occurs at positions 340, 341, 344, 347, 348, 354, and 372. Residues 363-399 are compositionally biased toward basic and acidic residues; sequence VSERTEQSTSEDKFSNKILNEKPTTDGPEKAVDEHAS. 4 disordered regions span residues 363 to 453, 498 to 650, 663 to 761, and 772 to 791; these read VSER…ENNR, VSQE…SIEE, ALGS…SGDL, and AKDS…KTLK. Residues 432-441 are compositionally biased toward polar residues; sequence PDTQDQQTVD. Residues 518 to 529 show a composition bias toward basic and acidic residues; that stretch reads LTKEETQEKLGK. Phosphoserine occurs at positions 543, 561, and 566. Residues 598 to 607 show a composition bias toward basic and acidic residues; sequence GGERVEDKQP. The span at 619–630 shows a compositional bias: polar residues; it reads QLTSTSETTRAT. Phosphoserine occurs at positions 643, 647, and 666. Positions 690 to 701 are enriched in low complexity; it reads AESQAPAASQPS. Over residues 746–761 the composition is skewed to polar residues; the sequence is TDSGTGSTVENSSGDL. Phosphoserine is present on residues Ser775 and Ser777. Position 812 is a phosphothreonine (Thr812). Ser816 carries the phosphoserine modification. Positions 824 to 1067 form a coiled coil; the sequence is LRRQELRELR…LKNRQTQERA (244 aa). One can recognise a UVR domain in the interval 873-908; sequence DQEIENLEKQQKQTIERLEQEHTNRLRDEAKRIKGE. Positions 944 to 963 are disordered; the sequence is KRRKEELAQSQHAQEQEFVQ. A compositionally biased stretch (low complexity) spans 954–963; it reads QHAQEQEFVQ. Phosphothreonine is present on Thr1095. A coiled-coil region spans residues 1107–1181; sequence AAQEEKRQKN…ELKEWREKLR (75 aa). The tract at residues 1109-1129 is disordered; it reads QEEKRQKNERMAQHQKHESQM.

It belongs to the protein kinase superfamily. STE Ser/Thr protein kinase family. STE20 subfamily. In terms of processing, proteolytically cleaved by caspase-3. Autophosphorylated. Ubiquitously expressed.

The protein resides in the cytoplasm. The catalysed reaction is L-seryl-[protein] + ATP = O-phospho-L-seryl-[protein] + ADP + H(+). The enzyme catalyses L-threonyl-[protein] + ATP = O-phospho-L-threonyl-[protein] + ADP + H(+). In terms of biological role, mediates apoptosis and actin stress fiber dissolution. The polypeptide is STE20-like serine/threonine-protein kinase (Slk) (Mus musculus (Mouse)).